We begin with the raw amino-acid sequence, 434 residues long: Sulfide-quinone reductase (434 aa).

FAD is bound by residues 8–12, 34–35, and 77–78; these read GAGTG and SA. The active-site Cysteine persulfide intermediate is the Cys160. FAD is bound by residues Ile302 and Gly322. Cys356 functions as the Cysteine persulfide intermediate in the catalytic mechanism. Lys391 is an FAD binding site.

It belongs to the SQRD family. As to quaternary structure, homodimer. FAD serves as cofactor.

It is found in the membrane. It catalyses the reaction n a quinone + n hydrogen sulfide + n H(+) = polysulfur(n-2) + n a quinol. In terms of biological role, catalyzes the oxidation of hydrogen sulfide, with the help of a quinone. Consecutive reaction cycles lead to the accumulation of a polysulfide product on the active site Cys residues; these products are released when they exceed a critical length, typically as cyclooctasulfur. The protein is Sulfide-quinone reductase of Acidithiobacillus ferrooxidans (strain ATCC 23270 / DSM 14882 / CIP 104768 / NCIMB 8455) (Ferrobacillus ferrooxidans (strain ATCC 23270)).